The primary structure comprises 547 residues: Chaperonin GroEL 1 (547 aa).

ATP contacts are provided by residues 30–33 (TLGP), Lys51, 87–91 (DGTTT), Gly415, and Asp494. Positions 524–547 (PKGKAKGGGAGAGMPDYGGDDMDY) are disordered.

The protein belongs to the chaperonin (HSP60) family. As to quaternary structure, forms a cylinder of 14 subunits composed of two heptameric rings stacked back-to-back. Interacts with the co-chaperonin GroES.

It localises to the cytoplasm. It carries out the reaction ATP + H2O + a folded polypeptide = ADP + phosphate + an unfolded polypeptide.. Functionally, together with its co-chaperonin GroES, plays an essential role in assisting protein folding. The GroEL-GroES system forms a nano-cage that allows encapsulation of the non-native substrate proteins and provides a physical environment optimized to promote and accelerate protein folding. The chain is Chaperonin GroEL 1 from Myxococcus xanthus (strain DK1622).